The chain runs to 464 residues: Zinc transporter 6-A (464 aa).

At Met-1–Lys-33 the chain is on the cytoplasmic side. A helical membrane pass occupies residues Ile-34–Ser-54. The Extracellular segment spans residues Thr-55 to Thr-64. The chain crosses the membrane as a helical span at residues Tyr-65–Met-85. Residues Lys-86–Arg-98 lie on the Cytoplasmic side of the membrane. Residues Phe-99–Leu-119 traverse the membrane as a helical segment. Residues Lys-120–Thr-134 are Extracellular-facing. A helical membrane pass occupies residues Gly-135–Ile-155. Residues Arg-156–Pro-200 are Cytoplasmic-facing. The helical transmembrane segment at Phe-201 to Ile-221 threads the bilayer. The Extracellular segment spans residues Asn-222–Asn-223. The chain crosses the membrane as a helical span at residues Tyr-224–Tyr-244. The Cytoplasmic portion of the chain corresponds to Pro-245–Gln-464.

This sequence belongs to the cation diffusion facilitator (CDF) transporter (TC 2.A.4) family. SLC30A subfamily. As to quaternary structure, heterodimer with SLC30A5; form a functional zinc ion transmembrane transporter.

It is found in the golgi apparatus. Its subcellular location is the trans-Golgi network membrane. Its function is as follows. Has probably no intrinsic transporter activity but together with SLC30A5 forms a functional zinc ion:proton antiporter heterodimer, mediating zinc entry into the lumen of organelles along the secretory pathway. As part of that zinc ion:proton antiporter, contributes to zinc ion homeostasis within the early secretory pathway and regulates the activation and folding of enzymes like alkaline phosphatases and enzymes involved in phosphatidylinositol glycan anchor biosynthesis. This chain is Zinc transporter 6-A (slc30a6-a), found in Xenopus laevis (African clawed frog).